The primary structure comprises 37 residues: Large ribosomal subunit protein bL36 (37 aa).

It belongs to the bacterial ribosomal protein bL36 family.

This is Large ribosomal subunit protein bL36 from Francisella tularensis subsp. tularensis (strain FSC 198).